Reading from the N-terminus, the 101-residue chain is MIPGELLIGPGEHPLNTGRRTKTLLVRNTGDRPIQVGSHYHFAETNQALDFDRAAARGMRLNIASGTAVRFEPGQERTVELLDYAGARLVFGFQGRVQGAP.

The protein belongs to the urease beta subunit family. As to quaternary structure, heterotrimer of UreA (gamma), UreB (beta) and UreC (alpha) subunits. Three heterotrimers associate to form the active enzyme.

The protein localises to the cytoplasm. It carries out the reaction urea + 2 H2O + H(+) = hydrogencarbonate + 2 NH4(+). Its pathway is nitrogen metabolism; urea degradation; CO(2) and NH(3) from urea (urease route): step 1/1. This is Urease subunit beta from Verminephrobacter eiseniae (strain EF01-2).